Reading from the N-terminus, the 2892-residue chain is MNPSYGRVRKKVSIISIPEFVPEHYEYENETTASGGASGGGSTRIEFDFDDFEEQIMRKSSMALPSRKLTIANSIDHGNNGNLHIGDIISLYTESSSNQEQRGFLSTLGLVDDRCIVELKDGRPESPPKKFRDCLFKVCPVNRYAAQKHLWTEQKRFQTGDSMFDDDLMNKLKVAADKEREENESEFQKTLGNVIQYGSMVQLLHVKSNKYITVQKNSPAKRERNAMKVYLDRAGNEGSWFIIEPAYKHYAIGDNVSAGNKISLIPNSVSTTQAGHVKSQLHLSSFNLLDHQSAAEVNCLNEPTEWQVFMFLLFDENQQNSVKSGDVVRLFHADQQTFLTLDTIPKQNPPTDVVFLRMTNRPSAADATSSRALWEVQVVQTNAYRGGTAKWNKAYRFKHLATDMYLSAEPSQVQVKPAMNGRRASLIYSKTNNPMAMYSDGPNGVTNESTDTTQQNIPSVWVLGPTKSEFPEEDANLLFQLDPSTFMKSNKEVPRRSYVRLLHQSSDKWVHATNATEKQNLHYSSKNEKGWVKVICEKNRVDKETFALLPVNPDEVRDLDFANDACKALRNFIKLIKIGQVISKESINSTTQLLIDCILFVTNSSDHLADPLKISDFSPSRDRQKLLREQEVLNQVFLLLKAPFLPRQGTTELGPLLSSPSELSDSRNEIFKTMFQLCYCLLKYSQVSYRKNQEFLAEKFGEIQEQIGFDLMAEDTMTAVLHNNPKLLEKYVKTPHVERFVELVRNNRQGKFLDYLADLCVCRGEANKKIQELICTSVLSSKHRDIFMDTKIIDGEIEVGWAPNFRKLVDIAEGAKSNSDDAEHLDYYRHQLDLLSQMCQEQQYLAIDPPPERRLMNISQQLPAELVLQCMSDNRLPYDLRGSFTRLMLHLHVVRGSPMSAIRHARLWWSIPENVNVSTYESVSVEAYSDGSRMRIGEGIAHKVLATVETYLMGLRNQSMEERQSVNSSKLTYEIVNLAKALAQFNFYSFNDLLQLTQNLLAIINEGPATEQVPSHRAMVNAIRNMSKSMMRGGNKENSKDLAKTPSVTAEEAGRTKEGRALNVKTKLIVAEILQFVMDVRRDYRITMALSWFKNVFPCDEDGSLMHSASINERMASELYDAIYRSSGHELHLDGRDGQLLLAILLQMTMSDYPPLTSIALKVFFRHFTQYQELLEDLKQVQLLVSNNDVENYRQIDRDLFILKNLTEKSELWVHGDRHHSIDTKEVDEKERTTEHDLLDHDLKSPRAFDSGDSMEALMAVLNEHYPSIRNECLQLLNRLLIKDDRNDAAVALQELSDKAPLIAYPLIRQMLVRLTGMCYRKGDPKPDTMNQQLLKNMRVYEVVLEFISVPHDKKHDHDMMKLITLSHEFLRSFCKTNKENQSRLYKFISYEKDAKEGMLRVETIEEVGTLVAIFRNNRELASNVPEELIAHIVGLIEHNSRNPIFLELLQALVCVYDKEIESGQEKVANEICAASDEVRQLYVDNASFEELEAMMKDEKESKGRSSDSRRKLKYHIELVRLLAMCTRGKNGNTELKCASQIPMDHIVRVVTAKQCLVEVKTVYLQLLLHCYIDTDAEMKDAYKTEYVDHILNNLLEDIRSLRVEKLTGAETATLEHYICHTVTEVLIKFFEAPYSALQQAKVDVHHHKKTFSEVLLELTYLEKGKLRGSKSSRNWYRVAECIKRLTKWAEEHNITLPATLAGPQMSGQTSVRQKWQQAASSAKWIGIGKRLNRQNTLNPGHRLYGTSNSMTEHTSANVVTCYHMMIGEFKFYLHPLHAAEGSVLVEVLHTPELLFPEGSALRDQCARGGVVAKLIQHCKTLMQNKQDNLCARVLQTLCKMCDCTKQQLTHQGQQLRQLLLQRYFGHHNNHHPPLDRQQSKIGEVIEAVKEKKEETWSQERDLYAIQCKLNDAGASDLVTDIIIMEPSREIFLKAIHLARALLHEGNDKVQHSFYMRMKQKDIHEPFFKAILTRIQTAQNRLKSDMMSCSDSKPKVSLSATVSRRSSTVLTPLIDAGDTGFNGALFEVPQQVRHPSISEMSQLSNDLTHSIPDLAPYQDEEKSTDALPPEVALVEPILRVLQLLCENHNSLLQNFLRKQSDRTNHNLVSETLSFLDTVCGSTKGSLGVFGEIGEHNFSLITQTLATLTEFCQGPCHENQNTMAMQENGLNIIISLVLNEIKPLADDHMELALEIKSQASKLLLAIMESRHDGENANRVLRNMANMSGGPKQLVHAIKQAYEMTNSNHHMLKSISRDLFRQAEDDLKKKSGPQITVNTVTLPEINVDASGIVSIHTEKNISSSLDDKFNDDDIPSVDPREVGHNIYILAHQLAIHDGELEIWLDGSDEKKDDLTREALNYYKERTAQIEIVRRDRTLERVVFPINDICSYLTKDTKDYVYNNTERDNQGSKVTEFFDEWETMYHEMIWQRKLQDRKWLSWCAFRLPLWTRLSFHFAFIVNALVARYYPLPEHSNSSISLGNLYSWFAVFSSFLLAHYLRHDKIYLHKTSLLILASLCFLLLSSIGVTLTLYIFGILQLVNKIVHVVAFVSNKGLEDRPIAEILACRNLHYLLVYLFICILGLLVHPMIYCILLFDIIFTEETLQNVIASVTRNYQSIVWTGLLALILLYFFSILGFLYFRHDFYLEVDPVENDSSATISSGIPSETCPSEGCPGLQPSEKDDNDDEKKVKSCETLWMCILQTGYQGLRNGGGIGDVLRNPAPWEDMFIWRVAYDMTFFVVLIVIVLNLIFGVIIDTFGDLRAEKNEKEQILKNNCFICGLDRSRFDNRSVTFETHRETEHNIWHYLYYIVMLQIKDETEFTGPESYVAQCVKDRNLDWFPRMQALSLQDSELDTDQSEVKQMKDQLLQMMTLMREIISQNEESRAFMEQFQPR.

Residues 1–2475 (MNPSYGRVRK…YPLPEHSNSS (2475 aa)) are Cytoplasmic-facing. MIR domains lie at 192–246 (GNVI…IEPA), 319–379 (QNSV…VQVV), 386–466 (GGTA…LGPT), and 490–551 (NKEV…LLPV). Residue 357–361 (RMTNR) participates in 1D-myo-inositol 1,4,5-trisphosphate binding. 1D-myo-inositol 1,4,5-trisphosphate contacts are provided by residues 625 to 628 (KLLR) and 689 to 691 (YRK). Residues 1030-1056 (MMRGGNKENSKDLAKTPSVTAEEAGRT) form a disordered region. Residues 1034–1043 (GNKENSKDLA) are compositionally biased toward basic and acidic residues. Residues 2476–2496 (ISLGNLYSWFAVFSSFLLAHY) form a helical membrane-spanning segment. Residues 2497 to 2514 (LRHDKIYLHKTSLLILAS) are Extracellular-facing. Residues 2515-2535 (LCFLLLSSIGVTLTLYIFGIL) traverse the membrane as a helical segment. The Cytoplasmic portion of the chain corresponds to 2536-2572 (QLVNKIVHVVAFVSNKGLEDRPIAEILACRNLHYLLV). A helical membrane pass occupies residues 2573-2593 (YLFICILGLLVHPMIYCILLF). Residues 2594–2615 (DIIFTEETLQNVIASVTRNYQS) are Extracellular-facing. The helical transmembrane segment at 2616–2636 (IVWTGLLALILLYFFSILGFL) threads the bilayer. The Cytoplasmic segment spans residues 2637–2735 (YFRHDFYLEV…FIWRVAYDMT (99 aa)). The span at 2655 to 2666 (ATISSGIPSETC) shows a compositional bias: polar residues. Residues 2655–2685 (ATISSGIPSETCPSEGCPGLQPSEKDDNDDE) form a disordered region. The helical transmembrane segment at 2736-2756 (FFVVLIVIVLNLIFGVIIDTF) threads the bilayer. Topologically, residues 2757-2892 (GDLRAEKNEK…RAFMEQFQPR (136 aa)) are extracellular.

The protein belongs to the InsP3 receptor family. Interacts with myo-1, myo-2, unc-54/myo-4 and nmy-2. Also interacts with iri-1. As to expression, isoform a is expressed in the anterior cells of the pharyngeal terminal bulb, vulva, rectal epithelial cells, spicule protractor muscles of the proctodeum and male-specific neuron CP8 or CP9. Isoform d is expressed in the spermatheca, excretory cell, amphid socket cells, PDA motor neuron, spicule retractor muscles, gubernaculum retractor muscles, posterior oblique muscles, diagonal muscles and the vas deferens. Also expressed in the intestine, pharynx, pharyngeal isthmus, pharyngeal intestinal valve, somatic gonad, hypodermal cells of the vulva, uterine sheath cells, tail, head, LUA motor neuron and the embryonic epidermis (at protein level).

The protein resides in the endoplasmic reticulum membrane. In terms of biological role, receptor for inositol 1,4,5-trisphosphate, a second messenger that regulates intracellular calcium homeostasis. Binds in vitro to both inositol 1,4,5-trisphosphate (1,4,5-InsP3) and inositol 2,4,5-trisphosphate (2,4,5-InsP3) with high affinity and does not discriminate between the phosphate at 1 or 2 position. Can also bind inositol 1,3,4,5-tetrakisphosphate (1,3,4,5-InsP4) and inositol 4,5-bisphosphate (4,5-InsP2), but with lower affinity. Acts as a timekeeper/rhythm generator via calcium signaling, affecting the defecation cycle and pharyngeal pumping. Affects normal hermaphrodite and male fertility as a participant in intracellular signaling by acting downstream of let-23/lin-3 which regulates ovulation, spermathecal valve dilation and male mating behavior. Important for early embryonic development; controls epidermal cell migration and may also regulate filopodial protrusive activity during epithelial morphogenesis. Component of inositol trisphosphate (IP3)-mediated downstream signaling pathways that controls amphid sensory neuronal (ASH)-mediated response to nose touch and benzaldehyde but not other ASH-mediated responses. Involved in modulating lifespan, acting downstream of transcription factor atf-6. The protein is Inositol 1,4,5-trisphosphate receptor itr-1 of Caenorhabditis elegans.